The primary structure comprises 464 residues: Sensor histidine kinase Hik34 (464 aa).

Residues 235–449 (ALTHEVRTPL…ILTIYLKCEQ (215 aa)) form the Histidine kinase domain. Phosphohistidine; by autocatalysis is present on H238.

Post-translationally, when expressed in E.coli autophosphorylates at 18 to 30 degrees Celsius; less phosphorylation occurs at 36 and none occurs at 42 or 48 degrees Celsius.

The enzyme catalyses ATP + protein L-histidine = ADP + protein N-phospho-L-histidine.. In terms of biological role, member of a two-component system Hik34/Rre1, controlling expression of at least 20 genes in response to hyperosmotic stress (0.5 M sorbitol) or salt (0.5 M NaCl). Represses expression of heat shock genes under normal growth conditions. Required for survival of long-term heat shock exposure. In Synechocystis sp. (strain ATCC 27184 / PCC 6803 / Kazusa), this protein is Sensor histidine kinase Hik34.